The chain runs to 202 residues: MADEYLVPLDQYLAAGVHIGTQQKTKDMKKFIYRVRQDGLYVLDVRKTDERLKVAGKFLARFEPQSILAVSVRLYGQKPVKKFGEVTGARAIPGRFLPGTMTNPAVKNFFEPEVIIITDPRADHQAMKEAIEIGIPIVALVDTENLLSYVDLAIPTNNKGRKALALIYWILAREILYNRGEISSREEFKIPVEEFEMKIVRR.

It belongs to the universal ribosomal protein uS2 family.

The polypeptide is Small ribosomal subunit protein uS2 (rps2) (Pyrococcus horikoshii (strain ATCC 700860 / DSM 12428 / JCM 9974 / NBRC 100139 / OT-3)).